Consider the following 499-residue polypeptide: NADH-quinone oxidoreductase subunit N (499 aa).

Helical transmembrane passes span 16-36, 42-62, 77-97, 109-129, 133-153, 167-187, 208-228, 252-272, 274-294, 302-322, 327-347, 376-396, 411-433, and 463-483; these read AAFSMSVVGGVGLAMIVLDAF, AIPWLGVAALGVSAVWEITHL, GGFVAFINLIILLTGLATILL, YGEVYALIMFCTVGMIMLGSA, VSIFLGLETMSVCLYVLTGFI, FLLGAFSTGFFLYGIALMYGA, LLFWGGFALFLVGFFFKVSAA, ATKAAAFAALILVLVHAVPGG, WQLSVAAVAVLTMVIGNVMAL, LLAYSSIAHAGYLLVGLSAGT, AGALFYLLVYAVMNIGAFGVM, GSTMGVFMLSLIGFPPLGGFI, TWLVVIGVLMSALSAYYYLRVVY, and GTLVVCAVALVVLGVFFGGVL.

This sequence belongs to the complex I subunit 2 family. NDH-1 is composed of 14 different subunits. Subunits NuoA, H, J, K, L, M, N constitute the membrane sector of the complex.

It localises to the cell inner membrane. The catalysed reaction is a quinone + NADH + 5 H(+)(in) = a quinol + NAD(+) + 4 H(+)(out). In terms of biological role, NDH-1 shuttles electrons from NADH, via FMN and iron-sulfur (Fe-S) centers, to quinones in the respiratory chain. The immediate electron acceptor for the enzyme in this species is believed to be a menaquinone. Couples the redox reaction to proton translocation (for every two electrons transferred, four hydrogen ions are translocated across the cytoplasmic membrane), and thus conserves the redox energy in a proton gradient. This Salinibacter ruber (strain DSM 13855 / M31) protein is NADH-quinone oxidoreductase subunit N.